A 682-amino-acid polypeptide reads, in one-letter code: DNA ligase (682 aa).

NAD(+) is bound by residues aspartate 43–aspartate 47, serine 92–leucine 93, and aspartate 123. The active-site N6-AMP-lysine intermediate is lysine 125. NAD(+) is bound by residues arginine 146, glutamate 184, lysine 302, and lysine 326. 4 residues coordinate Zn(2+): cysteine 420, cysteine 423, cysteine 438, and cysteine 443. The 80-residue stretch at threonine 603–leucine 682 folds into the BRCT domain.

This sequence belongs to the NAD-dependent DNA ligase family. LigA subfamily. Requires Mg(2+) as cofactor. Mn(2+) is required as a cofactor.

The catalysed reaction is NAD(+) + (deoxyribonucleotide)n-3'-hydroxyl + 5'-phospho-(deoxyribonucleotide)m = (deoxyribonucleotide)n+m + AMP + beta-nicotinamide D-nucleotide.. In terms of biological role, DNA ligase that catalyzes the formation of phosphodiester linkages between 5'-phosphoryl and 3'-hydroxyl groups in double-stranded DNA using NAD as a coenzyme and as the energy source for the reaction. It is essential for DNA replication and repair of damaged DNA. The chain is DNA ligase from Lawsonia intracellularis (strain PHE/MN1-00).